Here is a 677-residue protein sequence, read N- to C-terminus: Beta-galactosidase BgaA (677 aa).

Arg112 is a binding site for substrate. Cys116 is a Zn(2+) binding site. Asn150 contacts substrate. The Proton donor role is filled by Glu151. Positions 156, 158, and 161 each coordinate Zn(2+). The active-site Nucleophile is the Glu309. Substrate-binding positions include Trp317 and 357 to 360 (EKYH).

Belongs to the glycosyl hydrolase 42 family. In terms of assembly, dimer.

The catalysed reaction is Hydrolysis of terminal non-reducing beta-D-galactose residues in beta-D-galactosides.. No activity is lost during treatment with 20 or 100 mM EDTA in Z buffer for 3 hours at 0 degrees Celsius, nor is activity greatly stimulated by the addition of cations. Inhibited by 1 mM zinc and 1 mM copper, the levels of activity decrease to 10% of the untreated control. Nickel, cobalt and manganese at concentrations of 10 mM decrease enzyme activity to either 40% (for nickel and cobalt) or 60% (for manganese) of the activity in untreated controls. No change in enzyme activity in the presence of calcium and magnesium at concentrations up to 50 mM. EDTA-treated enzyme exhibits a slight increase in relative specific activity when it is assayed in the presence of 50 mM NaCl or 50 mM KCl, it does not exhibit enhanced activity at concentrations greater than 250 mM. Maintains between 20 and 40% of activity in the presence of 4 M NaCl or 4 M KCl, and it is more active in the presence of KCl than in the presence of NaCl. Retains 50% of activity in the presence of 3 M KCl or 2.5 M NaCl. Hydrolyzes o-nitrophenyl-beta-D-galactopyranoside (ONPG), p-nitrophenyl-beta-D-galactopyranoside (PNPG), 5-bromo-4-chloro-3-indoyl-beta-D-galactosde (X-gal), o-nitrophenyl-beta-D-fucopyranoside (ONPF) and p-nitrophenyl-beta-D-fucopyranoside (PNPF) with greatest activity towards ONPG and PNPG and low levels of activity with ONPF and PNPF. Detectable, but very low levels of activity towards p-nitrophenyl-beta-lactose (PNPL), p-nitrophenyl-beta-cellobiose (PNPC), p-nitrophenyl-alpha-galactopyranoside (PNP-alpha-G), and p-nitrophenyl-beta-xylopyranoside (PNPX). The sequence is that of Beta-galactosidase BgaA from Planococcus sp. (strain 'SOS Orange').